Consider the following 427-residue polypeptide: Glutamate-1-semialdehyde 2,1-aminomutase (427 aa).

Lys265 bears the N6-(pyridoxal phosphate)lysine mark.

This sequence belongs to the class-III pyridoxal-phosphate-dependent aminotransferase family. HemL subfamily. As to quaternary structure, homodimer. Requires pyridoxal 5'-phosphate as cofactor.

The protein localises to the cytoplasm. It catalyses the reaction (S)-4-amino-5-oxopentanoate = 5-aminolevulinate. It functions in the pathway porphyrin-containing compound metabolism; protoporphyrin-IX biosynthesis; 5-aminolevulinate from L-glutamyl-tRNA(Glu): step 2/2. The chain is Glutamate-1-semialdehyde 2,1-aminomutase from Neisseria meningitidis serogroup C / serotype 2a (strain ATCC 700532 / DSM 15464 / FAM18).